Here is a 198-residue protein sequence, read N- to C-terminus: Thymidine kinase (198 aa).

ATP is bound by residues 16-23 (GGMYSGKS) and 89-92 (EEGQ). Glutamate 90 acts as the Proton acceptor in catalysis. Zn(2+)-binding residues include cysteine 146, cysteine 149, cysteine 184, and cysteine 187.

Belongs to the thymidine kinase family. In terms of assembly, homotetramer.

It is found in the cytoplasm. The enzyme catalyses thymidine + ATP = dTMP + ADP + H(+). This Dictyoglomus thermophilum (strain ATCC 35947 / DSM 3960 / H-6-12) protein is Thymidine kinase.